The following is a 362-amino-acid chain: MGIRSTSVSDAVAALDERSREIFRRIVEGYLESGEPLGSRNLSRLLPMSLSPASVRNVMSDLEDLGLIYSPHISAGRLPTQIGLRFFVDAFMQVGDLSAEDRASIDRQVRAESGGNPVESMMNEASRMLSGISRGAGLVITSKSDPVLKHVEFIRLEPTKALAVLVGDHDQVENRIIELPAGVTSSQLAEAANFLNAHMSGQTLPELRKQLSQLKDNVRHELDALSRDLVERGIAVWAGSPDEGKPAQLIIRGRANLLEGLAGAEDLDRLRLLFDDLEKKDSLIEILNLAETGSGVRIFIGSENKLFSLSGSSLIVAPYRDDDDRIVGAVGVIGPTRLNYSRIVPMVDYTAQLVSRLSRNPL.

Belongs to the HrcA family.

Its function is as follows. Negative regulator of class I heat shock genes (grpE-dnaK-dnaJ and groELS operons). Prevents heat-shock induction of these operons. This chain is Heat-inducible transcription repressor HrcA, found in Rhizobium leguminosarum bv. trifolii (strain WSM2304).